A 1418-amino-acid polypeptide reads, in one-letter code: Alpha-latrotoxin-Lhe1a (1418 aa).

The N-terminal stretch at 1–20 (MIFVGETMERANHSLVRLRR) is a signal peptide. Residues 17 to 20 (RLRR) form a furin-like endopeptidase recognition region region. The helix H8 is the probable transmembrane region of the tetrameric pore inserted in the target cell membrane stretch occupies residues 238 to 257 (VLYALLYGTQTYISVMFFLL). A disulfide bridge connects residues Cys413 and Cys1066. ANK repeat units lie at residues 458–489 (LYNAASNPDSAVGFKEFTKLNYDGANIRATFD), 490–521 (QGRTIFHAVAKSGNDKILFGLTFLVKSTELNQ), 525–554 (KGYTPIHVAADSGNAGIVNLLIQRGVSINS), 559–589 (FLQTPLHLAAQRGFVNTFQRLMESSEININE), 593–622 (DGFTPLHYAVRGGERILEAFMNQIGIDVNA), 626–656 (KGLTPFHLAIIKNDWQVASTLLRNKKVDINA), 660–690 (NNMTALHYAAILGYLETTKQLINLKEINANV), 695–723 (GLLSALHYAILYKHDDVASFLLRSSNVNV), 729–758 (GGITPLHLAVMQGRKQVLSLMFNIGVNIEQ), 762–791 (EKYTPLHLAAMSKYPELIQILLDQDSNFEA), 795–824 (SGATPLHLATFKGKSQAALILLNNEVNWRD), 828–857 (NGQMPIHGAATTGLLDVAQAIISIDATVLD), 862–891 (NSDTPLNLAAQNSHIDAVKYFIDQGADINT), 895–924 (NGHAPLLAFSKKGNLDMVKYLFDKNANVYI), 928–957 (NGMNFFYYAVRNGHLNIIKYAMSEKDKFEW), 971–1003 (EECAISHFAVCDAVQFDKIEIVKFFIGTLGNFN), 1004–1033 (ICGPLHQAARYGHLHIVKYLVEEEVLSVDG), 1035–1064 (KTDTPLCYASENGHLAVVQYLVSNGAKVNH), 1068–1097 (NGMTAIDKAITKNHLQVVQFLAANGVDFRR), 1101–1131 (RGATPFLTAVAENAFDIAEYLIREKRQDINI), 1137–1166 (DKETALHLAVYYKNLQMIKLLVKYGIDVTI), and 1170–1199 (YDKTVLDIATDAKFSNIVKYLKKNSGKFRR). The 4C4.1 epitope stretch occupies residues 1026-1032 (EEVLSVD). Positions 1196-1199 (KFRR) are furin-like endopeptidase recognition region. The propeptide occupies 1200-1418 (EYKSSYGEHS…SEKKIQKISI (219 aa)).

Belongs to the cationic peptide 01 (latrotoxin) family. 03 (alpha-latrotoxin) subfamily. Homotetramer in membranes. Post-translationally, processed by furin-like proteases at both the N- and C-termini. As to expression, expressed in venom gland, cephalothorax, and abdomen tissues from both males and females.

The protein resides in the secreted. Its subcellular location is the target cell membrane. Its function is as follows. Presynaptic neurotoxin that causes massive release of neurotransmitters from vertebrate (but not invertebrate) nerve terminals and endocrine cells via a complex mechanism involving activation of receptor(s) and toxin insertion into the plasma membrane with subsequent pore formation. Binds to neurexin-1-alpha (NRXN1) in a calcium dependent manner, adhesion G protein-coupled receptor L1 (ADGRL1, also termed latrophilin-1 and calcium-independent receptor of latrotoxin (CIRL)), and receptor-type tyrosine-protein phosphatase S (PTPRS), also termed PTP sigma. NRXN1 and PTPRS are suggested to provide a platform for binding and subsequent pore formation events. In contrast, binding to ADGRL1 does not involve oligomerization and channel formation, but direct downstream stimulation of the synaptic fusion machinery. This Latrodectus hesperus (Western black widow spider) protein is Alpha-latrotoxin-Lhe1a.